Here is a 415-residue protein sequence, read N- to C-terminus: Phakinin (415 aa).

The interval 1–26 (MSTRRVVVDAPAGASSSMPLQRHKAS) is disordered. Ser-2 carries the post-translational modification N-acetylserine. The interval 2 to 114 (STRRVVVDAP…LGAVEDLGGC (113 aa)) is head. A phosphoserine mark is found at Ser-26, Ser-32, and Ser-35. Thr-53 carries the post-translational modification Phosphothreonine. Residues Ser-90 and Ser-100 each carry the phosphoserine modification. An IF rod domain is found at 104-415 (DLGAVEDLGG…HALLDREESS (312 aa)). 3 coiled-coil regions span residues 115–144 (LVEY…ESKA), 199–248 (RKAA…VKML), and 295–395 (QAKQ…LSHK). The interval 396–415 (CQLQRDVASYHALLDREESS) is tail.

Belongs to the intermediate filament family. As to quaternary structure, part of a complex required for lens intermediate filament formation composed of BFSP1, BFSP2 and CRYAA. Found in a complex composed of PPL (via C-terminal linker domain), BFSP1 and BFSP2 in the retinal lens. Within the complex interacts with PPL (via C-terminal linker domain) and with BFSP1. Identified in a complex that contains VIM, EZR, AHNAK, BFSP1, BFSP2, ANK2, PLEC, PRX and spectrin. Interacts with LGSN. Interacts with VIM. In terms of tissue distribution, abundantly expressed in both the inner and outer cortex of the retina, expressed at a lower level in the nucleus of the retina (at protein level). Detected in eye lens fiber cells (at protein level).

The protein resides in the cell membrane. It localises to the cytoplasm. It is found in the cytoskeleton. Its subcellular location is the cell cortex. In terms of biological role, required for the correct formation of lens intermediate filaments as part of a complex composed of BFSP1, BFSP2 and CRYAA. Plays a role in maintenance of retinal lens optical clarity. The sequence is that of Phakinin (BFSP2) from Bos taurus (Bovine).